The following is a 407-amino-acid chain: Nuclear hormone receptor family member nhr-134 (407 aa).

An NR C4-type zinc finger spans residues 11-31 (CEICGQKTSGRHFGVMSCRSC). The segment at 47–66 (RCPNGNCKLLENGKFKCKKC) adopts an NR C4-type; degenerate zinc-finger fold. One can recognise an NR LBD domain in the interval 157 to 407 (QFHNSLERLA…FSEPDMFEST (251 aa)).

It belongs to the nuclear hormone receptor family.

Its subcellular location is the nucleus. Functionally, orphan nuclear receptor. The protein is Nuclear hormone receptor family member nhr-134 (nhr-134) of Caenorhabditis elegans.